The chain runs to 158 residues: Large ribosomal subunit protein uL15 (158 aa).

The span at 1-13 shows a compositional bias: basic and acidic residues; it reads MKLNEIKDNEGST. Residues 1 to 45 form a disordered region; the sequence is MKLNEIKDNEGSTHSRKRLGRGIGSGSGKTGGRGVKGQKSRSGVA. A compositionally biased stretch (gly residues) spans 21-35; that stretch reads RGIGSGSGKTGGRGV.

It belongs to the universal ribosomal protein uL15 family. In terms of assembly, part of the 50S ribosomal subunit.

Functionally, binds to the 23S rRNA. The sequence is that of Large ribosomal subunit protein uL15 from Rhizobium johnstonii (strain DSM 114642 / LMG 32736 / 3841) (Rhizobium leguminosarum bv. viciae).